Consider the following 265-residue polypeptide: Zinc transporter ZupT (265 aa).

Helical transmembrane passes span 6–26 (IAFA…GGAL), 37–57 (FMAA…FMEI), 77–97 (WTMM…DRLV), 122–142 (GMFT…ATFL), 150–170 (IAIP…IAVA), 184–204 (FWWA…GFAL), 208–228 (FIGP…MVFI), and 245–265 (CAIY…ALFI). Residues Asn-133 and Glu-136 each contribute to the Fe(2+) site. Positions 136 and 161 each coordinate Zn(2+). Residues Asn-162, Glu-165, and Glu-194 each coordinate Fe(2+). Residue Glu-165 coordinates Zn(2+).

It belongs to the ZIP transporter (TC 2.A.5) family. ZupT subfamily.

The protein localises to the cell membrane. The enzyme catalyses Zn(2+)(in) = Zn(2+)(out). In terms of biological role, mediates zinc uptake. May also transport other divalent cations. This is Zinc transporter ZupT from Corynebacterium aurimucosum (strain ATCC 700975 / DSM 44827 / CIP 107346 / CN-1) (Corynebacterium nigricans).